The following is a 269-amino-acid chain: Embryonic polyadenylate-binding protein 2 (269 aa).

Residues 26–54 (EAQGWGAWGRTEKTSLVPSAGSDKEAEEN) form a disordered region. Positions 139–216 (RSVYVGNVDY…RVIKVLPKRT (78 aa)) constitute an RRM domain. Positions 240 to 269 (LQGSLQRKPRLRPHGQSRGRGRASPWFSPY) are disordered. The span at 246 to 260 (RKPRLRPHGQSRGRG) shows a compositional bias: basic residues.

Its subcellular location is the cytoplasm. Binds the poly(A) tail of mRNA. This is Embryonic polyadenylate-binding protein 2 (Pabpn1l) from Rattus norvegicus (Rat).